A 286-amino-acid chain; its full sequence is MDWYVGTEWEDKNRGLAKKVIGLQFTEMDKPTIISTVEFSVNKKATNLGGRPSKYLVSDESATYPQKHSLEMGTSLTAVDCYLELLLQQFVPGETAACSITTKTGERIEFELKLEKIVKNTQVEKLSAAEIYEVALRLKESGVATFKTFPKFAFDYFVRAAKLLITYKPFDKLTKKTNGINGQAVEELFIQIQTNLAACLLQEKRYEHVIYHTQFVETEESPSEKSIYRRALAYYHLKEFAKAQATIERMPNYEEKREFSKLRDNIAVSWKDSKAHYKEVVQRMFS.

In terms of assembly, interacts with dco (via nuclear localization signal). Interacts with Ankrd49; interaction promotes the stability of both complex members.

It is found in the cytoplasm. Its subcellular location is the cytosol. The protein localises to the cell membrane. Its function is as follows. Functions in planar polarity establishment and circadian rhythms by promoting the activity and localization of dco/dbt. Required for regulating the levels of dco/dbt and per in the nuclei of photoreceptor cells and thereby is involved in normal oscillations of the circadian clock proteins in the eye. In the dark, the cry circadian and rhodopsin visual pathways, activate the accumulation of the protein into Arr1- and Arr2-dependent cytosolic foci which are required for dco localization to photoreceptor nuclei. It is possible that the accumulation into foci results in the dissociation of the protein from dco, thus allowing dco to interact with importins and microtubles for nuclear transport. By promoting nuclei localization and kinase activity of dco towards per, it is essential for regulating normal cycles of per nuclear accumulation in brain circadian neurons and thus is important for normal circadian behavior. Essential for regulating the establishment of planar cell polarity in the wing. Forms a complex with Ankrd49 which likely functions in the regulation of planar polarity by promoting the activity of dco during planar polarity establishment. Within the complex, directly promotes dco activity in regulating phosphorylation and asymmetric localization of core planar polarity proteins such as dsh. In Drosophila melanogaster (Fruit fly), this protein is Protein Bride of doubletime.